The sequence spans 179 residues: Large ribosomal subunit protein uL5 (179 aa).

It belongs to the universal ribosomal protein uL5 family. Part of the 50S ribosomal subunit; part of the 5S rRNA/L5/L18/L25 subcomplex. Contacts the 5S rRNA and the P site tRNA. Forms a bridge to the 30S subunit in the 70S ribosome.

Its function is as follows. This is one of the proteins that bind and probably mediate the attachment of the 5S RNA into the large ribosomal subunit, where it forms part of the central protuberance. In the 70S ribosome it contacts protein S13 of the 30S subunit (bridge B1b), connecting the 2 subunits; this bridge is implicated in subunit movement. Contacts the P site tRNA; the 5S rRNA and some of its associated proteins might help stabilize positioning of ribosome-bound tRNAs. This chain is Large ribosomal subunit protein uL5, found in Geobacillus thermodenitrificans (strain NG80-2).